A 359-amino-acid polypeptide reads, in one-letter code: Uracil-DNA glycosylase (359 aa).

A mitochondrion-targeting transit peptide spans 1-21 (MWCMRRLPTNSVMTVARKRKQ). The Proton acceptor role is filled by D162.

It belongs to the uracil-DNA glycosylase (UDG) superfamily. UNG family.

The protein localises to the mitochondrion. The protein resides in the nucleus. The catalysed reaction is Hydrolyzes single-stranded DNA or mismatched double-stranded DNA and polynucleotides, releasing free uracil.. Its function is as follows. Excises uracil residues from the DNA which can arise as a result of misincorporation of dUMP residues by DNA polymerase or due to deamination of cytosine. Not involved in strand-directed mismatch repair. This is Uracil-DNA glycosylase from Saccharomyces cerevisiae (strain ATCC 204508 / S288c) (Baker's yeast).